Here is a 188-residue protein sequence, read N- to C-terminus: uncharacterized protein (188 aa).

Residues 133–153 are disordered; it reads PKGRPTMKLQYPKMPPKPKTR.

It belongs to the IS150/IS1296 orfA family.

This is an uncharacterized protein from Haemophilus influenzae (strain ATCC 51907 / DSM 11121 / KW20 / Rd).